The primary structure comprises 584 residues: uncharacterized protein (584 aa).

The first 27 residues, 1–27 (MGLSRKKIFTWPLLLTGMAVVSTTFSS), serve as a signal peptide directing secretion. A lipid anchor (N-palmitoyl cysteine) is attached at Cys28. Cys28 carries S-diacylglycerol cysteine lipidation. The segment at 530-570 (NLPKKEGSTNQANQQTNQTNRSTDATKKDSSSDETNKNPLA) is disordered. Over residues 538 to 552 (TNQANQQTNQTNRST) the composition is skewed to low complexity. Residues 553–565 (DATKKDSSSDETN) are compositionally biased toward basic and acidic residues.

The protein belongs to the MG067/MG068/MG395 family.

The protein localises to the cell membrane. This is an uncharacterized protein from Mycoplasmoides gallisepticum (strain R(low / passage 15 / clone 2)) (Mycoplasma gallisepticum).